The following is a 607-amino-acid chain: Chaperone protein DnaK (607 aa).

Threonine 174 is subject to Phosphothreonine; by autocatalysis. The tract at residues alanine 571 to lysine 607 is disordered. Positions alanine 589–lysine 607 are enriched in basic and acidic residues.

The protein belongs to the heat shock protein 70 family.

Its function is as follows. Acts as a chaperone. This chain is Chaperone protein DnaK, found in Desulforudis audaxviator (strain MP104C).